The chain runs to 104 residues: Large ribosomal subunit protein uL24 (104 aa).

It belongs to the universal ribosomal protein uL24 family. In terms of assembly, part of the 50S ribosomal subunit.

Functionally, one of two assembly initiator proteins, it binds directly to the 5'-end of the 23S rRNA, where it nucleates assembly of the 50S subunit. One of the proteins that surrounds the polypeptide exit tunnel on the outside of the subunit. This Treponema denticola (strain ATCC 35405 / DSM 14222 / CIP 103919 / JCM 8153 / KCTC 15104) protein is Large ribosomal subunit protein uL24.